The sequence spans 712 residues: Polyribonucleotide nucleotidyltransferase (712 aa).

Positions 487 and 493 each coordinate Mg(2+). In terms of domain architecture, KH spans 554–613 (PKIITMTINPDKIRDVIGPSGKQINKIIEETGVKIDIEQDGTVFISSINQEMNDKAKKII). The region spanning 623 to 691 (GEIYEGKVKR…KQGRVNLSRK (69 aa)) is the S1 motif domain.

Belongs to the polyribonucleotide nucleotidyltransferase family. Mg(2+) is required as a cofactor.

It localises to the cytoplasm. The catalysed reaction is RNA(n+1) + phosphate = RNA(n) + a ribonucleoside 5'-diphosphate. Involved in mRNA degradation. Catalyzes the phosphorolysis of single-stranded polyribonucleotides processively in the 3'- to 5'-direction. This chain is Polyribonucleotide nucleotidyltransferase, found in Bacillus cereus (strain AH820).